The following is a 177-amino-acid chain: ATP synthase subunit delta (177 aa).

Belongs to the ATPase delta chain family. As to quaternary structure, F-type ATPases have 2 components, F(1) - the catalytic core - and F(0) - the membrane proton channel. F(1) has five subunits: alpha(3), beta(3), gamma(1), delta(1), epsilon(1). F(0) has three main subunits: a(1), b(2) and c(10-14). The alpha and beta chains form an alternating ring which encloses part of the gamma chain. F(1) is attached to F(0) by a central stalk formed by the gamma and epsilon chains, while a peripheral stalk is formed by the delta and b chains.

The protein resides in the cell inner membrane. In terms of biological role, f(1)F(0) ATP synthase produces ATP from ADP in the presence of a proton or sodium gradient. F-type ATPases consist of two structural domains, F(1) containing the extramembraneous catalytic core and F(0) containing the membrane proton channel, linked together by a central stalk and a peripheral stalk. During catalysis, ATP synthesis in the catalytic domain of F(1) is coupled via a rotary mechanism of the central stalk subunits to proton translocation. Its function is as follows. This protein is part of the stalk that links CF(0) to CF(1). It either transmits conformational changes from CF(0) to CF(1) or is implicated in proton conduction. The chain is ATP synthase subunit delta from Neisseria meningitidis serogroup B (strain ATCC BAA-335 / MC58).